Consider the following 196-residue polypeptide: RNA pyrophosphohydrolase (196 aa).

One can recognise a Nudix hydrolase domain in the interval 6 to 149 (GYRPNVGIVI…KRDVYRKVMK (144 aa)). Residues 38–59 (GGINDNESAEQAMYRELHEEVG) carry the Nudix box motif. The disordered stretch occupies residues 166 to 196 (SREANSQSNSANKKYSQTKYTKRHFYKSKGQ). Positions 167 to 184 (REANSQSNSANKKYSQTK) are enriched in polar residues. The segment covering 185-196 (YTKRHFYKSKGQ) has biased composition (basic residues).

It belongs to the Nudix hydrolase family. RppH subfamily. The cofactor is a divalent metal cation.

Its function is as follows. Accelerates the degradation of transcripts by removing pyrophosphate from the 5'-end of triphosphorylated RNA, leading to a more labile monophosphorylated state that can stimulate subsequent ribonuclease cleavage. In Haemophilus influenzae (strain 86-028NP), this protein is RNA pyrophosphohydrolase.